The following is a 433-amino-acid chain: G-protein coupled receptor 22 (433 aa).

At 1 to 45 (MCFSPILEINMQSESNITVRDDIDDINTNMYQPLSYPLSFQVSLT) the chain is on the extracellular side. N-linked (GlcNAc...) asparagine glycosylation is present at N16. A helical membrane pass occupies residues 46 to 66 (GFLMLEIVLGLGSNLTVLVLY). Topologically, residues 67 to 85 (CMKSNLINSVSNIITMNLH) are cytoplasmic. The chain crosses the membrane as a helical span at residues 86–106 (VLDVIICVGCIPLTIVILLLS). Topologically, residues 107–115 (LESNTALIC) are extracellular. The chain crosses the membrane as a helical span at residues 116–136 (CFHEACVSFASVSTAINVFAI). Residues 137 to 156 (TLDRYDISVKPANRILTMGR) are Cytoplasmic-facing. The chain crosses the membrane as a helical span at residues 157–177 (AVMLMISIWIFSFFSFLIPFI). Residues 178–208 (EVNFFSLQSGNTWENKTLLCVSTNEYYTELG) lie on the Extracellular side of the membrane. A glycan (N-linked (GlcNAc...) asparagine) is linked at N192. The chain crosses the membrane as a helical span at residues 209–229 (MYYHLLVQIPIFFFTVVVMLI). The Cytoplasmic segment spans residues 230-315 (TYTKILQALN…ERQKRVFRMS (86 aa)). Residues 316–336 (LLIISTFLLCWTPISVLNTTI) traverse the membrane as a helical segment. Over 337–349 (LCLGPSDLLVKLR) the chain is Extracellular. Residues 350–370 (LCFLVMAYGTTIFHPLLYAFT) form a helical membrane-spanning segment. Topologically, residues 371–433 (RQKFQKVLKS…KCLVPQVVTD (63 aa)) are cytoplasmic.

It belongs to the G-protein coupled receptor 1 family. High expression in adult and fetal heart tissue. Expressed in the brain, with enrichment in the accumbens, amygdala, cerebellum, cortex, and hippocampus regions.

It is found in the cell membrane. Functionally, orphan G-protein coupled receptor. Seems to act through a G(i)/G(o) mediated pathway. May be involved in ciliogenesis. This is G-protein coupled receptor 22 from Homo sapiens (Human).